A 241-amino-acid polypeptide reads, in one-letter code: MSGESARSLGKGSAPPGPVPEGSIRIYSMRFCPFAERTRLVLKAKGIRHEVININLKNKPEWFFKKNPFGLVPVLENSQGQLIYESAITCEYLDEAYPGKKLLPDDPYEKACQKMILELFSKVPSLVGSFIRSQNKEDYAGLKEEFRKEFTKLEEVLTNKKTTFFGGNSISMIDYLIWPWFERLEAMKLNECVDHTPKLKLWMAAMKEDPTVSALLTSEKDWQGFLELYLQNSPEACDYGL.

Serine 2 carries the N-acetylserine modification. Residues 22-101 enclose the GST N-terminal domain; that stretch reads GSIRIYSMRF…YLDEAYPGKK (80 aa). Cysteine 32 serves as the catalytic Nucleophile. At lysine 57 the chain carries N6-acetyllysine. Residues lysine 59, valine 72, and 85–86 each bind glutathione; that span reads ES. In terms of domain architecture, GST C-terminal spans 106-230; it reads DPYEKACQKM…DWQGFLELYL (125 aa). At serine 129 the chain carries Phosphoserine. Lysine 143, lysine 148, and lysine 152 each carry N6-acetyllysine.

The protein belongs to the GST superfamily. Omega family. As to quaternary structure, homodimer. In terms of tissue distribution, ubiquitous. Highest expression in liver, pancreas, skeletal muscle, spleen, thymus, colon, blood leukocyte and heart. Lowest expression in brain, placenta and lung.

The protein resides in the cytoplasm. Its subcellular location is the cytosol. The enzyme catalyses RX + glutathione = an S-substituted glutathione + a halide anion + H(+). The catalysed reaction is L-dehydroascorbate + 2 glutathione = glutathione disulfide + L-ascorbate. It catalyses the reaction methylarsonate + 2 glutathione + H(+) = methylarsonous acid + glutathione disulfide + H2O. Monomethylarsonic acid reductase activity is competitively inhibited by 1-chloro 2,4-dinitrobenzene (CDNB) and by deoxycholate. Functionally, exhibits glutathione-dependent thiol transferase and dehydroascorbate reductase activities. Has S-(phenacyl)glutathione reductase activity. Also has glutathione S-transferase activity. Participates in the biotransformation of inorganic arsenic and reduces monomethylarsonic acid (MMA) and dimethylarsonic acid. This chain is Glutathione S-transferase omega-1 (GSTO1), found in Homo sapiens (Human).